The primary structure comprises 425 residues: MNYARFITATSAARKPSTIRVMTEILSKAPKSVISLATGAPNPNTFPFKTAVITIENGKPIQFNEQMMKRALQYSQSAGIPELLSWLKQLQVKLHNPPTIHYAPTQGQMDLCVTCGSQEGLCKVFEMIVNPGDNILVNEPIYSGTIHALQPLGCNMINVSSDEHGIIPDSLREILSKWKPEDSKNPKKNSPKFLYTVPNGNNPSGNSLTAERKREIYELARKYDFLIIEDDPYYFMQFNKPWAPTFLSMDEDGRVIRADSFSKVLSSGLRIGFITGPKPLIERIVLHIQVSTMHPSTFAQLLVSQLLYQWGEEGFLGHVDRVIDFYRKQRDALMAAADKWLSGLAEWHVPTAGMFLWVKIKGIHDVRKLIEEKAFKKEIFMLPGCGFYTDSSAPCPYFRASFSSASPEQMDLAFQRLAQLIKESL.

The N-terminal 29 residues, Met1–Ala29, are a transit peptide targeting the mitochondrion. Arg20 provides a ligand contact to substrate. An N6-acetyllysine modification is found at Lys69. Substrate is bound by residues Tyr74 and Tyr142. The segment at Trp178–Leu208 is disordered. Lys179 is modified (N6-acetyllysine). The segment covering Pro198 to Leu208 has biased composition (polar residues). Asn202 provides a ligand contact to substrate. Residue Lys263 is modified to N6-(pyridoxal phosphate)lysine; alternate. N6-acetyllysine; alternate is present on residues Lys263 and Lys339. Lys263 and Lys339 each carry N6-succinyllysine; alternate. Residue Arg399 coordinates substrate. At Lys422 the chain carries N6-acetyllysine.

It belongs to the class-I pyridoxal-phosphate-dependent aminotransferase family. As to quaternary structure, homodimer. Requires pyridoxal 5'-phosphate as cofactor.

Its subcellular location is the mitochondrion. It catalyses the reaction L-kynurenine + 2-oxoglutarate = kynurenate + L-glutamate + H2O. The enzyme catalyses L-2-aminoadipate + 2-oxoglutarate = 2-oxoadipate + L-glutamate. It carries out the reaction glycine + 2-oxoglutarate = glyoxylate + L-glutamate. The catalysed reaction is L-kynurenine + glyoxylate = kynurenate + glycine + H2O. It catalyses the reaction 3-hydroxy-L-kynurenine + glyoxylate = xanthurenate + glycine + H2O. The enzyme catalyses 2-oxohexanoate + L-kynurenine = L-2-aminohexanoate + kynurenate + H2O. It carries out the reaction 3-phenylpyruvate + L-kynurenine = kynurenate + L-phenylalanine + H2O. The catalysed reaction is 4-methylsulfanyl-2-oxobutanoate + L-kynurenine = kynurenate + L-methionine + H2O. It catalyses the reaction 2-oxo-3-sulfanylpropanoate + L-kynurenine = kynurenate + L-cysteine + H2O. The enzyme catalyses indole-3-pyruvate + L-kynurenine = kynurenate + L-tryptophan + H2O. It carries out the reaction 2-oxopentanoate + L-kynurenine = L-2-aminopentanoate + kynurenate + H2O. The catalysed reaction is 4-methyl-2-oxopentanoate + L-kynurenine = kynurenate + L-leucine + H2O. It catalyses the reaction glyoxylate + L-methionine = 4-methylsulfanyl-2-oxobutanoate + glycine. The enzyme catalyses L-2-aminoadipate + glyoxylate = 2-oxoadipate + glycine. It carries out the reaction L-tyrosine + glyoxylate = 3-(4-hydroxyphenyl)pyruvate + glycine. The catalysed reaction is glyoxylate + L-phenylalanine = 3-phenylpyruvate + glycine. It catalyses the reaction L-tryptophan + glyoxylate = indole-3-pyruvate + glycine. The enzyme catalyses L-leucine + glyoxylate = 4-methyl-2-oxopentanoate + glycine. It carries out the reaction 2-oxobutanoate + L-kynurenine = (2S)-2-aminobutanoate + kynurenate + H2O. The catalysed reaction is 2-oxoadipate + L-kynurenine = L-2-aminoadipate + kynurenate + H2O. Its pathway is amino-acid degradation; L-lysine degradation via saccharopine pathway; glutaryl-CoA from L-lysine: step 4/6. Functionally, transaminase with broad substrate specificity. Has transaminase activity towards aminoadipate, kynurenine, methionine and glutamate. Shows activity also towards tryptophan, aspartate and hydroxykynurenine. Accepts a variety of oxo-acids as amino-group acceptors, with a preference for 2-oxoglutarate, 2-oxocaproic acid, phenylpyruvate and alpha-oxo-gamma-methiol butyric acid. Can also use glyoxylate as amino-group acceptor (in vitro). In Bos taurus (Bovine), this protein is Kynurenine/alpha-aminoadipate aminotransferase, mitochondrial.